A 179-amino-acid chain; its full sequence is Large ribosomal subunit protein uL5 (179 aa).

This sequence belongs to the universal ribosomal protein uL5 family. Part of the 50S ribosomal subunit; part of the 5S rRNA/L5/L18/L25 subcomplex. Contacts the 5S rRNA and the P site tRNA. Forms a bridge to the 30S subunit in the 70S ribosome.

In terms of biological role, this is one of the proteins that bind and probably mediate the attachment of the 5S RNA into the large ribosomal subunit, where it forms part of the central protuberance. In the 70S ribosome it contacts protein S13 of the 30S subunit (bridge B1b), connecting the 2 subunits; this bridge is implicated in subunit movement. Contacts the P site tRNA; the 5S rRNA and some of its associated proteins might help stabilize positioning of ribosome-bound tRNAs. The polypeptide is Large ribosomal subunit protein uL5 (Rickettsia felis (strain ATCC VR-1525 / URRWXCal2) (Rickettsia azadi)).